Reading from the N-terminus, the 629-residue chain is MAGSPFTTALLSAWTLSTVAVGYPNGPWYQTPLGPDVVRDPTRYPGAIEKTVDYVVVGGGASGLTVAARLSEDPSVTVAIVEAGSFYQEVSNASVVPGYAADYLTGHIPPELDWGFNTEPQAGADGRVKHYTNAKTLGGNSAFNLMAYMTTSVGAMQKWAEEVDDDSWTYANVTRYFQKSLNFTGIDPHKRRANSTPELNPADVGYGGPLDVTYPNYAQPFSSWVKKAFDQVGMRPVGGFMSGELFGSSWVLDTINHTDGQRASSAKTFLEPILHRRENLFLYNRTLAERVLFDADRTATGVQASRGKTVFNLTATKEVVLTAGGLMTPQLLQVSGVGNAALLQELRIPVVLDAPQVGQQMEDHISFGVAHRVDVETNSALKYAGPRQHAVEEFNEAQAGILSSPGPDFGGFADIPSELRNFSASTHADLAGLPKDWPEGFFISFPVDVGFPQDGYNYAMIVCTLMTPMSRGHISIRSPSMHDRPVIDPRWLTSTSDVEIAVAAVRRIRQYLQMPVLERNVLVGGEVAPGPEVQTFAEIHDYLKKNFNSMSHPACTCRMGKKGDPDAVVDPKGRVFGVKNLRIADASVFRFLPPGLPLGVVYMVAEKIADDIKHDQKHGAGEEGLRTEF.

Positions 1-22 (MAGSPFTTALLSAWTLSTVAVG) are cleaved as a signal peptide. FAD-binding positions include 61–62 (AS) and 82–83 (EA). A glycan (N-linked (GlcNAc...) asparagine) is linked at N92. Residue 144–147 (NLMA) coordinates FAD. 6 N-linked (GlcNAc...) asparagine glycosylation sites follow: N172, N182, N256, N284, N312, and N421. The active-site Proton acceptor is H552. FAD-binding positions include A586 and 597-598 (PL).

It belongs to the GMC oxidoreductase family. As to quaternary structure, homodimer. It depends on FAD as a cofactor.

The protein operates within secondary metabolite biosynthesis. Dehydrogenase; part of the gene cluster that mediates the biosynthesis of pyranoviolin A, a pyranonigrin analog with a C-3 methoxy group. Initially, the PKS portion of pyvA synthesizes C-10 carbon chain from 5 molecules of malonyl-CoA, which is then condensed with the thiolation (T) domain-bound glycine activated by the adenylation (A) domain. The subsequent chain release by Dieckmann condensation (DKC) could be catalyzed by the TE domain present at the C-terminus of pyvA and/or the alpha/beta hydrolase pyvD, installing the tetramic acid moiety. The FAD-dependent monooxygenase pyvC next epoxidizes one of the olefins of the polyketide part, and the epoxide ring-opening induces the dihydro-gamma-pyrone ring formation. The cytochrome P450 monooxygeanse pyvB would be responsible for the 2 consecutive reactions, in which the dihydro-gamma-pyrone is oxidized to gamma-pyrone and C-7 is hydroxylated to yield pyranonigrin F. Finally, the O-methyltransferase pyvH methylates the C-3 hydroxy group to complete the biosynthesis. The chain is Dehydrogenase pyvF from Aspergillus violaceofuscus (strain CBS 115571).